A 204-amino-acid polypeptide reads, in one-letter code: MFKRIRRVLVLAVFLFAGYKAYRVHQDVKQVMTYQPMVREILSEQDTPANEELVLAMIYTETKGKEGDVMQSSESASGSTNTINDNASSIRQGIQTLTGNLYLAQKKGVDIWTAVQAYNFGPAYIDFIAQNGKENTLALAKQYSRETVAPLLGNRTGKTYSYIHPISIFHGAELYVNGGNYYYSRQVRLNLYIIKCFTLFSTSG.

It is found in the cell surface. In Streptococcus pneumoniae serotype 4 (strain ATCC BAA-334 / TIGR4), this protein is Pneumococcal vaccine antigen A (pvaA).